The following is a 360-amino-acid chain: Membrane-bound lytic murein transglycosylase C (360 aa).

The first 16 residues, 1 to 16 (MKKIFALALIAPLLIS), serve as a signal peptide directing secretion. A lipid anchor (N-palmitoyl cysteine) is attached at Cys-17. Cys-17 carries S-diacylglycerol cysteine lipidation.

Belongs to the transglycosylase Slt family.

It is found in the cell outer membrane. The catalysed reaction is Exolytic cleavage of the (1-&gt;4)-beta-glycosidic linkage between N-acetylmuramic acid (MurNAc) and N-acetylglucosamine (GlcNAc) residues in peptidoglycan, from either the reducing or the non-reducing ends of the peptidoglycan chains, with concomitant formation of a 1,6-anhydrobond in the MurNAc residue.. Functionally, murein-degrading enzyme. May play a role in recycling of muropeptides during cell elongation and/or cell division. This is Membrane-bound lytic murein transglycosylase C from Cronobacter sakazakii (strain ATCC BAA-894) (Enterobacter sakazakii).